A 394-amino-acid chain; its full sequence is Xylose isomerase (394 aa).

Active-site residues include His54 and Asp57. Mg(2+)-binding residues include Glu181, Glu217, His220, Asp245, Asp255, Asp257, and Asp292.

This sequence belongs to the xylose isomerase family. As to quaternary structure, homotetramer. Requires Mg(2+) as cofactor.

The protein localises to the cytoplasm. The enzyme catalyses alpha-D-xylose = alpha-D-xylulofuranose. This chain is Xylose isomerase (xylA), found in Actinoplanes sp. (strain ATCC 31351 / 3876) (Ampullariella sp.).